The following is an 805-amino-acid chain: Lon protease (805 aa).

In terms of domain architecture, Lon N-terminal spans 13 to 205; that stretch reads IPIIVEDELF…KLIDYVIEEI (193 aa). An ATP-binding site is contributed by 366 to 373; that stretch reads GPPGVGKT. A Lon proteolytic domain is found at 603–803; the sequence is KDQIGLVNGL…DDVLKNALVA (201 aa). Catalysis depends on residues Ser708 and Lys751.

Belongs to the peptidase S16 family. In terms of assembly, homohexamer. Organized in a ring with a central cavity.

It is found in the cytoplasm. The catalysed reaction is Hydrolysis of proteins in presence of ATP.. Functionally, ATP-dependent serine protease that mediates the selective degradation of mutant and abnormal proteins as well as certain short-lived regulatory proteins. Required for cellular homeostasis and for survival from DNA damage and developmental changes induced by stress. Degrades polypeptides processively to yield small peptide fragments that are 5 to 10 amino acids long. Binds to DNA in a double-stranded, site-specific manner. The sequence is that of Lon protease from Campylobacter concisus (strain 13826).